The chain runs to 262 residues: Ubiquitin thioesterase otubain-like (262 aa).

An OTU domain is found at 64 to 262 (KFIRRTRPDG…PGHYDILYPN (199 aa)). D72 is a catalytic residue. C75 acts as the Nucleophile in catalysis. I168 contributes to the substrate binding site. The active site involves H255.

Belongs to the peptidase C65 family.

It catalyses the reaction Thiol-dependent hydrolysis of ester, thioester, amide, peptide and isopeptide bonds formed by the C-terminal Gly of ubiquitin (a 76-residue protein attached to proteins as an intracellular targeting signal).. Functionally, possible hydrolase that can remove conjugated ubiquitin from proteins in vitro and may therefore play an important regulatory role at the level of protein turnover by preventing degradation. This Drosophila melanogaster (Fruit fly) protein is Ubiquitin thioesterase otubain-like.